The sequence spans 617 residues: tRNA 5-methylaminomethyl-2-thiouridine biosynthesis bifunctional protein MnmC (617 aa).

The tRNA (mnm(5)s(2)U34)-methyltransferase stretch occupies residues 1–226 (MLDWQNGQLY…KREMLQGDLP (226 aa)). The interval 241–617 (IGGGIAGCAA…SPAIPVSIKG (377 aa)) is FAD-dependent cmnm(5)s(2)U34 oxidoreductase.

In the N-terminal section; belongs to the methyltransferase superfamily. tRNA (mnm(5)s(2)U34)-methyltransferase family. It in the C-terminal section; belongs to the DAO family. It depends on FAD as a cofactor.

The protein localises to the cytoplasm. It carries out the reaction 5-aminomethyl-2-thiouridine(34) in tRNA + S-adenosyl-L-methionine = 5-methylaminomethyl-2-thiouridine(34) in tRNA + S-adenosyl-L-homocysteine + H(+). Catalyzes the last two steps in the biosynthesis of 5-methylaminomethyl-2-thiouridine (mnm(5)s(2)U) at the wobble position (U34) in tRNA. Catalyzes the FAD-dependent demodification of cmnm(5)s(2)U34 to nm(5)s(2)U34, followed by the transfer of a methyl group from S-adenosyl-L-methionine to nm(5)s(2)U34, to form mnm(5)s(2)U34. This is tRNA 5-methylaminomethyl-2-thiouridine biosynthesis bifunctional protein MnmC from Nitrosospira multiformis (strain ATCC 25196 / NCIMB 11849 / C 71).